We begin with the raw amino-acid sequence, 362 residues long: Heat-inducible transcription repressor HrcA (362 aa).

The protein belongs to the HrcA family.

In terms of biological role, negative regulator of class I heat shock genes (grpE-dnaK-dnaJ and groELS operons). Prevents heat-shock induction of these operons. This chain is Heat-inducible transcription repressor HrcA, found in Rhodopseudomonas palustris (strain ATCC BAA-98 / CGA009).